The following is an 862-amino-acid chain: Protein translocase subunit SecA (862 aa).

Residues Gln-88, 106–110 (GEGKT), and Asp-506 contribute to the ATP site. 4 residues coordinate Zn(2+): Cys-839, Cys-841, Cys-850, and His-851.

The protein belongs to the SecA family. In terms of assembly, monomer and homodimer. Part of the essential Sec protein translocation apparatus which comprises SecA, SecYEG and auxiliary proteins SecDF-YajC and YidC. Requires Zn(2+) as cofactor.

The protein resides in the cell inner membrane. Its subcellular location is the cytoplasm. The catalysed reaction is ATP + H2O + cellular proteinSide 1 = ADP + phosphate + cellular proteinSide 2.. Functionally, part of the Sec protein translocase complex. Interacts with the SecYEG preprotein conducting channel. Has a central role in coupling the hydrolysis of ATP to the transfer of proteins into and across the cell membrane, serving as an ATP-driven molecular motor driving the stepwise translocation of polypeptide chains across the membrane. The polypeptide is Protein translocase subunit SecA (Campylobacter jejuni subsp. jejuni serotype O:2 (strain ATCC 700819 / NCTC 11168)).